The primary structure comprises 106 residues: uncharacterized protein (106 aa).

The N-terminal stretch at Met-1–Gly-25 is a signal peptide.

The protein to the N-terminal of the FimA/PapA family of fimbria proteins.

This is an uncharacterized protein from Salmonella typhi.